The primary structure comprises 439 residues: Arginine biosynthesis bifunctional protein ArgJ, mitochondrial (439 aa).

Residues threonine 175, lysine 201, threonine 212, glutamate 301, asparagine 434, and serine 439 each coordinate substrate. Threonine 212 acts as the Nucleophile in catalysis.

It belongs to the ArgJ family. As to quaternary structure, heterodimer of an alpha and a beta chain. In terms of processing, the alpha and beta chains are autoproteolytically processed from a single precursor protein within the mitochondrion.

It localises to the mitochondrion matrix. The catalysed reaction is N(2)-acetyl-L-ornithine + L-glutamate = N-acetyl-L-glutamate + L-ornithine. It catalyses the reaction L-glutamate + acetyl-CoA = N-acetyl-L-glutamate + CoA + H(+). It participates in amino-acid biosynthesis; L-arginine biosynthesis; L-ornithine and N-acetyl-L-glutamate from L-glutamate and N(2)-acetyl-L-ornithine (cyclic): step 1/1. It functions in the pathway amino-acid biosynthesis; L-arginine biosynthesis; N(2)-acetyl-L-ornithine from L-glutamate: step 1/4. Its function is as follows. Catalyzes two activities which are involved in the cyclic version of arginine biosynthesis: the synthesis of acetylglutamate from glutamate and acetyl-CoA, and of ornithine by transacetylation between acetylornithine and glutamate. The polypeptide is Arginine biosynthesis bifunctional protein ArgJ, mitochondrial (Candida albicans (strain WO-1) (Yeast)).